The sequence spans 694 residues: Elongation factor G (694 aa).

Positions 6–288 (KLYRNIGIAA…GVIEYLPSPT (283 aa)) constitute a tr-type G domain. Residues 15–22 (AHVDAGKT), 86–90 (DTPGH), and 140–143 (NKMD) each bind GTP.

The protein belongs to the TRAFAC class translation factor GTPase superfamily. Classic translation factor GTPase family. EF-G/EF-2 subfamily.

Its subcellular location is the cytoplasm. In terms of biological role, catalyzes the GTP-dependent ribosomal translocation step during translation elongation. During this step, the ribosome changes from the pre-translocational (PRE) to the post-translocational (POST) state as the newly formed A-site-bound peptidyl-tRNA and P-site-bound deacylated tRNA move to the P and E sites, respectively. Catalyzes the coordinated movement of the two tRNA molecules, the mRNA and conformational changes in the ribosome. This Legionella pneumophila (strain Paris) protein is Elongation factor G.